Here is a 154-residue protein sequence, read N- to C-terminus: UPF0178 protein ABC1688 (154 aa).

It belongs to the UPF0178 family.

The chain is UPF0178 protein ABC1688 from Shouchella clausii (strain KSM-K16) (Alkalihalobacillus clausii).